The following is a 187-amino-acid chain: uncharacterized protein (187 aa).

Gly2 carries the N-myristoyl glycine; by host lipid modification.

The protein belongs to the mimivirus L332/L333/L334 family.

This is an uncharacterized protein from Acanthamoeba polyphaga (Amoeba).